The sequence spans 426 residues: Probable imidazolonepropionase (426 aa).

Tyr-158 and His-192 together coordinate 4-imidazolone-5-propanoate. Tyr-158 is a binding site for N-formimidoyl-L-glutamate. Residue His-260 coordinates Fe(3+). His-260 lines the Zn(2+) pocket. Glu-263 is a binding site for 4-imidazolone-5-propanoate. Asp-334 provides a ligand contact to Fe(3+). Asp-334 lines the Zn(2+) pocket. Asn-336 serves as a coordination point for N-formimidoyl-L-glutamate.

It belongs to the metallo-dependent hydrolases superfamily. HutI family. Zn(2+) is required as a cofactor. Fe(3+) serves as cofactor.

It catalyses the reaction 4-imidazolone-5-propanoate + H2O = N-formimidoyl-L-glutamate. Its pathway is amino-acid degradation; L-histidine degradation into L-glutamate; N-formimidoyl-L-glutamate from L-histidine: step 3/3. In Dictyostelium discoideum (Social amoeba), this protein is Probable imidazolonepropionase (amdhd1).